Consider the following 189-residue polypeptide: Probable DNA-directed RNA polymerase subunit delta (189 aa).

One can recognise an HTH HARE-type domain in the interval L14 to W81. Acidic residues-rich tracts occupy residues E90–E100 and E118–E189. A disordered region spans residues E90–E189.

It belongs to the RpoE family. In terms of assembly, RNAP is composed of a core of 2 alpha, a beta and a beta' subunits. The core is associated with a delta subunit and one of several sigma factors.

Participates in both the initiation and recycling phases of transcription. In the presence of the delta subunit, RNAP displays an increased specificity of transcription, a decreased affinity for nucleic acids, and an increased efficiency of RNA synthesis because of enhanced recycling. In Lactobacillus delbrueckii subsp. bulgaricus (strain ATCC 11842 / DSM 20081 / BCRC 10696 / JCM 1002 / NBRC 13953 / NCIMB 11778 / NCTC 12712 / WDCM 00102 / Lb 14), this protein is Probable DNA-directed RNA polymerase subunit delta.